Consider the following 478-residue polypeptide: Glutamine synthetase (478 aa).

Residue K14 forms an Isoglutamyl lysine isopeptide (Lys-Gln) (interchain with Q-Cter in protein Pup) linkage. In terms of domain architecture, GS beta-grasp spans 16–100 (ENVEYVDIRF…MNFFVHDPFT (85 aa)). Residues 108–478 (PRNVARKAEN…PYEFSLYYDV (371 aa)) form the GS catalytic domain. Residues E133 and E135 each contribute to the Mg(2+) site. Residue E214 coordinates ATP. Mg(2+)-binding residues include E219 and E227. ATP is bound at residue 230–232 (YKF). Residues 271–272 (NG) and G272 contribute to the L-glutamate site. H276 is a binding site for Mg(2+). Residues 278-280 (HQS) and S280 contribute to the ATP site. 3 residues coordinate L-glutamate: R329, E335, and R347. ATP is bound by residues R347, R352, and K361. E366 provides a ligand contact to Mg(2+). Residue R368 coordinates L-glutamate. Residue Y406 is modified to O-AMP-tyrosine.

This sequence belongs to the glutamine synthetase family. As to quaternary structure, oligomer of 12 subunits arranged in the form of two hexagons. The cofactor is Mg(2+).

It is found in the cytoplasm. It carries out the reaction L-glutamate + NH4(+) + ATP = L-glutamine + ADP + phosphate + H(+). When cellular nitrogen levels are high, the C-terminal adenylyl transferase (AT) of GlnE inhibits GlnA by covalent transfer of an adenylyl group from ATP to Tyr-406. Conversely, when nitrogen levels are low, the N-terminal adenylyl removase (AR) of GlnE activates GlnA by removing the adenylyl group by phosphorolysis. The fully adenylated enzyme complex is inactive. Functionally, involved in nitrogen metabolism via ammonium assimilation. Catalyzes the ATP-dependent biosynthesis of glutamine from glutamate and ammonia. The protein is Glutamine synthetase of Mycolicibacterium smegmatis (strain ATCC 700084 / mc(2)155) (Mycobacterium smegmatis).